Here is a 205-residue protein sequence, read N- to C-terminus: Ribosomal RNA small subunit methyltransferase G (205 aa).

S-adenosyl-L-methionine is bound by residues Gly-73, Leu-78, 124-125 (VE), and Arg-139.

This sequence belongs to the methyltransferase superfamily. RNA methyltransferase RsmG family.

The protein localises to the cytoplasm. The enzyme catalyses guanosine(527) in 16S rRNA + S-adenosyl-L-methionine = N(7)-methylguanosine(527) in 16S rRNA + S-adenosyl-L-homocysteine. In terms of biological role, specifically methylates the N7 position of guanine in position 527 of 16S rRNA. The sequence is that of Ribosomal RNA small subunit methyltransferase G from Erwinia tasmaniensis (strain DSM 17950 / CFBP 7177 / CIP 109463 / NCPPB 4357 / Et1/99).